Reading from the N-terminus, the 365-residue chain is tRNA N6-adenosine threonylcarbamoyltransferase (365 aa).

Fe cation-binding residues include H119 and H123. Residues 141–145 (LVSGG), D174, G187, and N288 contribute to the substrate site. D316 is a binding site for Fe cation.

It belongs to the KAE1 / TsaD family. The cofactor is Fe(2+).

It localises to the cytoplasm. The enzyme catalyses L-threonylcarbamoyladenylate + adenosine(37) in tRNA = N(6)-L-threonylcarbamoyladenosine(37) in tRNA + AMP + H(+). Required for the formation of a threonylcarbamoyl group on adenosine at position 37 (t(6)A37) in tRNAs that read codons beginning with adenine. Is involved in the transfer of the threonylcarbamoyl moiety of threonylcarbamoyl-AMP (TC-AMP) to the N6 group of A37, together with TsaE and TsaB. TsaD likely plays a direct catalytic role in this reaction. This Agrobacterium fabrum (strain C58 / ATCC 33970) (Agrobacterium tumefaciens (strain C58)) protein is tRNA N6-adenosine threonylcarbamoyltransferase.